A 345-amino-acid polypeptide reads, in one-letter code: Mitochondrial substrate carrier family protein J (345 aa).

At 1-31 (MSSSHTIQETKEVHTKTNKRIQWDDLDPKRY) the chain is on the mitochondrial intermembrane side. 3 Solcar repeats span residues 30–118 (RYYF…VKQG), 129–217 (DLLF…SKSK), and 255–342 (EDPI…VKKL). The helical transmembrane segment at 32–52 (YFYNFLLGGSIDLLMFPLDVI) threads the bilayer. Over 53-88 (RTRLQVQGSQNVIQSFPQYNGTFDGFKKLIRLEGKR) the chain is Mitochondrial matrix. The chain crosses the membrane as a helical span at residues 89–110 (ALYKGFLTSECGYLCSRAIYFG). Residues 111–129 (SYEFVKQGFLKGRSDSDSD) are Mitochondrial intermembrane-facing. Residues 130–150 (LLFVTTISGAISEALASVIWV) form a helical membrane-spanning segment. Over 151–191 (PFDVATQSVQIQGSLSKPKYKGGSDVFKKIYGERGIKGLYK) the chain is Mitochondrial matrix. A helical transmembrane segment spans residues 192–208 (GFGATIIRNVPYSGIWW). Over 209-257 (GTYEISKSKLTQFNIRQKLGLKERSSHSLAVSAEIDKNNPSHEVENEDP) the chain is Mitochondrial intermembrane. The chain crosses the membrane as a helical span at residues 258–278 (IIHFISGFFAAVFATSITNPL). Over 279–316 (DVAKTRLQTGVFPENEKPNFYTIIKSTIRKEGIRALWK) the chain is Mitochondrial matrix. A helical transmembrane segment spans residues 317 to 337 (GLVPSLLTSTPYSMISIFLYE). At 338–345 (EVKKLSLK) the chain is on the mitochondrial intermembrane side.

This sequence belongs to the mitochondrial carrier (TC 2.A.29) family.

The protein localises to the mitochondrion inner membrane. Its function is as follows. Mitochondrial solute carriers shuttle metabolites, nucleotides, and cofactors through the mitochondrial inner membrane. The polypeptide is Mitochondrial substrate carrier family protein J (mcfJ) (Dictyostelium discoideum (Social amoeba)).